We begin with the raw amino-acid sequence, 190 residues long: Shikimate kinase (190 aa).

An ATP-binding site is contributed by 13 to 18; it reads GSGKTT. Threonine 17 contacts Mg(2+). Residues aspartate 35, arginine 59, and glycine 81 each coordinate substrate. Residue arginine 119 coordinates ATP. Arginine 138 contributes to the substrate binding site. Residue glutamine 155 coordinates ATP.

Belongs to the shikimate kinase family. As to quaternary structure, monomer. It depends on Mg(2+) as a cofactor.

Its subcellular location is the cytoplasm. It carries out the reaction shikimate + ATP = 3-phosphoshikimate + ADP + H(+). It participates in metabolic intermediate biosynthesis; chorismate biosynthesis; chorismate from D-erythrose 4-phosphate and phosphoenolpyruvate: step 5/7. In terms of biological role, catalyzes the specific phosphorylation of the 3-hydroxyl group of shikimic acid using ATP as a cosubstrate. The protein is Shikimate kinase of Nitrosococcus oceani (strain ATCC 19707 / BCRC 17464 / JCM 30415 / NCIMB 11848 / C-107).